Here is a 346-residue protein sequence, read N- to C-terminus: Dihydroorotase (346 aa).

Zn(2+)-binding residues include His-13 and His-15. Substrate-binding positions include 15-17 (HLR) and Asn-41. Residues Lys-99, His-136, and His-174 each contribute to the Zn(2+) site. Lys-99 bears the N6-carboxylysine mark. Residue His-136 coordinates substrate. Residue Leu-219 participates in substrate binding. Residue Asp-247 participates in Zn(2+) binding. Residue Asp-247 is part of the active site. 2 residues coordinate substrate: His-251 and Ala-263.

Belongs to the metallo-dependent hydrolases superfamily. DHOase family. Class II DHOase subfamily. As to quaternary structure, homodimer. Requires Zn(2+) as cofactor.

The enzyme catalyses (S)-dihydroorotate + H2O = N-carbamoyl-L-aspartate + H(+). Its pathway is pyrimidine metabolism; UMP biosynthesis via de novo pathway; (S)-dihydroorotate from bicarbonate: step 3/3. In terms of biological role, catalyzes the reversible cyclization of carbamoyl aspartate to dihydroorotate. This chain is Dihydroorotase, found in Rhizobium leguminosarum bv. trifolii (strain WSM2304).